The following is a 193-amino-acid chain: Achaete-scute homolog 2 (193 aa).

Disordered regions lie at residues methionine 1–arginine 58 and proline 128–serine 177. The bHLH domain occupies alanine 50–leucine 102. Positions proline 128 to arginine 152 are enriched in low complexity.

In terms of assembly, efficient DNA binding requires dimerization with another basic helix-loop-helix (bHLH) protein. Forms heterodimers with bHLH transcription factor TCF3. May not heterodimerise with bHLH protein HAND1. Expressed in placenta.

It is found in the nucleus. Functionally, transcription factor. Binds to E-box motifs 5'-CANNTG-3' in the regulatory elements of target genes, probably as a heterodimer with another basic helix-loop-helix (bHLH) protein such as the transcription factor TCF3. May bind both open and closed chromatin, acting as a pioneer transcription factor to allow other factors to bind and activate lineage-specific genes. Required during post-implantation development for the generation of some differentiated trophoblast cell types. Transcriptional activity of ASCL2 may be antagonised in a subset of trophoblast cells by bHLH transcription factor HAND1, perhaps by competing for dimerization with other bHLH proteins. Involved in differentiation and function of follicular T-helper (Tfh) cells, thereby playing a role in germinal center responses; probably modulates expression of genes involved in Tfh cell function, such as BCL6. May also act as a suppressor of Th1-, Th2- and Th17-cell differentiation. Induces the formation of stem cells in intestinal crypts in vitro, synergistically activating transcription of target genes, such as SOX9, together with TCF4/beta-catenin. May form a bistable transcriptional switch, controlling expression of its own gene together with Wnt/R-spondin signaling, and thereby maintaining stem cell characteristics. Modulates expression of target genes, including perhaps down-regulating EGR1/Krox24 and chemokine CXCL10/Mob-1 and up-regulating CXCR4 and CDKN1C/p57kip2, in Schwann cells. May play a role in reducing proliferation of Schwann cells, perhaps acting via modulation of expression of CDKN1C. May be dispensable for blastocyst formation and later embryonic function. May be involved in the determination of neuronal precursors. The protein is Achaete-scute homolog 2 (ASCL2) of Bos taurus (Bovine).